Consider the following 259-residue polypeptide: UPF0246 protein Pfl01_0961 (259 aa).

It belongs to the UPF0246 family.

In Pseudomonas fluorescens (strain Pf0-1), this protein is UPF0246 protein Pfl01_0961.